Consider the following 199-residue polypeptide: Glycerol-3-phosphate acyltransferase (199 aa).

5 consecutive transmembrane segments (helical) span residues 5–25 (AFLV…VALV), 51–71 (KLGV…VLCA), 79–99 (VFLS…VFLY), 112–132 (VFLG…VAVI), and 153–173 (CAWL…GLVI).

The protein belongs to the PlsY family. As to quaternary structure, probably interacts with PlsX.

The protein resides in the cell inner membrane. The catalysed reaction is an acyl phosphate + sn-glycerol 3-phosphate = a 1-acyl-sn-glycero-3-phosphate + phosphate. It functions in the pathway lipid metabolism; phospholipid metabolism. Catalyzes the transfer of an acyl group from acyl-phosphate (acyl-PO(4)) to glycerol-3-phosphate (G3P) to form lysophosphatidic acid (LPA). This enzyme utilizes acyl-phosphate as fatty acyl donor, but not acyl-CoA or acyl-ACP. This chain is Glycerol-3-phosphate acyltransferase, found in Solidesulfovibrio magneticus (strain ATCC 700980 / DSM 13731 / RS-1) (Desulfovibrio magneticus).